We begin with the raw amino-acid sequence, 115 residues long: NAD(P)H-quinone oxidoreductase subunit M (115 aa).

Belongs to the complex I NdhM subunit family. As to quaternary structure, NDH-1 can be composed of about 15 different subunits; different subcomplexes with different compositions have been identified which probably have different functions.

The protein localises to the cellular thylakoid membrane. The enzyme catalyses a plastoquinone + NADH + (n+1) H(+)(in) = a plastoquinol + NAD(+) + n H(+)(out). It catalyses the reaction a plastoquinone + NADPH + (n+1) H(+)(in) = a plastoquinol + NADP(+) + n H(+)(out). Functionally, NDH-1 shuttles electrons from an unknown electron donor, via FMN and iron-sulfur (Fe-S) centers, to quinones in the respiratory and/or the photosynthetic chain. The immediate electron acceptor for the enzyme in this species is believed to be plastoquinone. Couples the redox reaction to proton translocation, and thus conserves the redox energy in a proton gradient. Cyanobacterial NDH-1 also plays a role in inorganic carbon-concentration. This chain is NAD(P)H-quinone oxidoreductase subunit M, found in Prochlorococcus marinus (strain NATL1A).